We begin with the raw amino-acid sequence, 167 residues long: C-X-C motif chemokine 15 (167 aa).

The N-terminal stretch at 1 to 25 (MAAQGWSMLLLAVLNLGIFVRPCDT) is a signal peptide. Cystine bridges form between C30–C57 and C32–C73. S157 bears the Phosphoserine mark.

This sequence belongs to the intercrine alpha (chemokine CxC) family. Expression restricted to the lung, produced by bronchoepithelial cells and is released into the airways. Expressed at low levels in fetal lung.

It is found in the secreted. Its function is as follows. Chemotactic for neutrophils. Involved in lung-specific neutrophil trafficking during normal and inflammatory conditions. This is C-X-C motif chemokine 15 (Cxcl15) from Mus musculus (Mouse).